The following is a 701-amino-acid chain: Polyribonucleotide nucleotidyltransferase (701 aa).

Mg(2+) contacts are provided by Asp-483 and Asp-489. Residues 550-609 form the KH domain; the sequence is PRIYTLHIPTDKIRDVIGPGGKVIRGIIEQTGVKIDVEDDGTIHVASADEASANKAIQII. The 68-residue stretch at 619–686 folds into the S1 motif domain; the sequence is GKTYLGKVVR…EGNKIKLSRK (68 aa).

This sequence belongs to the polyribonucleotide nucleotidyltransferase family. Mg(2+) is required as a cofactor.

It localises to the cytoplasm. The catalysed reaction is RNA(n+1) + phosphate = RNA(n) + a ribonucleoside 5'-diphosphate. Involved in mRNA degradation. Catalyzes the phosphorolysis of single-stranded polyribonucleotides processively in the 3'- to 5'-direction. In Solibacter usitatus (strain Ellin6076), this protein is Polyribonucleotide nucleotidyltransferase.